The sequence spans 949 residues: Phosphocholine transferase AnkX (949 aa).

Positions 155-289 (LNPEQIPDLA…IFNTVEIIEQ (135 aa)) constitute a Fido domain. ANK repeat units lie at residues 391–420 (VGKT…DLSL), 424–453 (DGKT…SQED), 464–494 (HGKT…QINE), 498–527 (SGSS…DISD), 554–583 (LNKE…DIDI), 588–617 (DKAT…NTRL), 658–687 (NGNP…RVDF), 691–720 (LGNN…TLLH), 725–767 (ERRN…DLNK), and 771–800 (KGKT…HTNI).

It is found in the secreted. The protein localises to the host cytoplasm. It catalyses the reaction [Rab1 protein]-L-serine + CDP-choline = [Rab1 protein]-O-phosphocholine-L-serine + CMP + H(+). Virulence effector that plays a role in hijacking the host vesicular trafficking by recruiting the small guanosine triphosphatase (GTPase) Rab1 to the cytosolic face of the Legionella-containing vacuole (LCVs). Acts as a phosphocholine transferase by mediating the addition of phosphocholine to Ser residues of host RAB1 (RAB1A, RAB1B or RAB1C) and RAB35, leading to displacement of GDP dissociation inhibitors (GDI). Phosphocholination of target proteins also impairs accessibility to GTPase effector LepB. Can act on both GDP-bound and GTP-bound Rab proteins. The sequence is that of Phosphocholine transferase AnkX (ankX) from Legionella pneumophila subsp. pneumophila (strain Philadelphia 1 / ATCC 33152 / DSM 7513).